A 182-amino-acid chain; its full sequence is Probable RNA 2'-phosphotransferase (182 aa).

This sequence belongs to the KptA/TPT1 family.

Functionally, removes the 2'-phosphate from RNA via an intermediate in which the phosphate is ADP-ribosylated by NAD followed by a presumed transesterification to release the RNA and generate ADP-ribose 1''-2''-cyclic phosphate (APPR&gt;P). May function as an ADP-ribosylase. The chain is Probable RNA 2'-phosphotransferase from Pseudomonas aeruginosa (strain UCBPP-PA14).